Consider the following 311-residue polypeptide: Glutaminase (311 aa).

Substrate is bound by residues serine 66, asparagine 116, glutamate 162, asparagine 169, tyrosine 193, tyrosine 245, and valine 263.

This sequence belongs to the glutaminase family. As to quaternary structure, homotetramer.

The catalysed reaction is L-glutamine + H2O = L-glutamate + NH4(+). The protein is Glutaminase of Rhodopseudomonas palustris (strain TIE-1).